A 660-amino-acid polypeptide reads, in one-letter code: DNA mismatch repair protein MutL (660 aa).

The protein belongs to the DNA mismatch repair MutL/HexB family.

In terms of biological role, this protein is involved in the repair of mismatches in DNA. It is required for dam-dependent methyl-directed DNA mismatch repair. May act as a 'molecular matchmaker', a protein that promotes the formation of a stable complex between two or more DNA-binding proteins in an ATP-dependent manner without itself being part of a final effector complex. In Streptococcus pyogenes serotype M12 (strain MGAS2096), this protein is DNA mismatch repair protein MutL.